The following is a 591-amino-acid chain: MALDPTKHADWEIAQDAEKDMLTIYEIGEKLGLTKEELLPQGHYIAKIDFRAVLARLKDKPDGKYIDVTAITPTPLGEGKSTSSMGLVQGLGKLGKSVCAAIRQPSGGPTMNIKGSAAGGGLAQCIPLTPFSLGFTGDINAIMNAHNLAMVALTSRMQHERNYTDEQLERLSGMKRIDIDPTRVEMGWIMDFCCQSLRNIIIGIDGVNGKSDGYMMKSKFGIAVSSEVMAILAVAKDLKDMRERMGKIVVAYTKKGKPVTTEDLQVAGAMTAWMVDALNPSLIQTLEGQPVLVHAGPFANIAIGQSSIIADRVGLKLADYHVTESGFGADIGFEKFWNLKCRFSGLKPDCAVIVATIRALKCHGGAPVPVPGKPMPEEYNTESVEWVEKGCANLLHHIRNVRKAGISPVVCINAFYSDTDAEIAKVRELSEAEGARVALSRHWEKGGDGAIEFAETVIEACEEETEFKFLYELDMPLKERIELIAKEVYGADGVDYSNEANASLARIQADPELAKLGMCMVKTHLSLSDNPSLKGVPTGWRLMIREVLTYGGAGFIVPVAGTISLMPGTGSNPAFKRVDVDCETGKVEGVF.

Residue 74–81 (TPLGEGKS) coordinates ATP.

Belongs to the formate--tetrahydrofolate ligase family.

It catalyses the reaction (6S)-5,6,7,8-tetrahydrofolate + formate + ATP = (6R)-10-formyltetrahydrofolate + ADP + phosphate. It participates in one-carbon metabolism; tetrahydrofolate interconversion. The protein is Formate--tetrahydrofolate ligase of Desulforapulum autotrophicum (strain ATCC 43914 / DSM 3382 / VKM B-1955 / HRM2) (Desulfobacterium autotrophicum).